The chain runs to 776 residues: Serine/threonine-protein kinase-like protein CCR2 (776 aa).

Positions 1-22 (MQPNSHIFVIITISSLIITVSA) are cleaved as a signal peptide. The Extracellular segment spans residues 23–432 (YGSTGTIAAA…QKEQREVRRL (410 aa)). N59, N92, N154, N162, N205, N278, N287, and N350 each carry an N-linked (GlcNAc...) asparagine glycan. The stretch at 341-396 (NCGDGWFAFNASILKESELTSLCSFHNLNICLRCGISCLEGYFPSSTCNPNADRVC) is one TNFR-Cys repeat. 3 disulfide bridges follow: C342–C371, C374–C388, and C378–C396. N-linked (GlcNAc...) asparagine glycosylation is present at N404. The chain crosses the membrane as a helical span at residues 433-453 (VIIIGCSVLGFLVMLIGLSFI). At 454–776 (PKMTKGSKRD…DLIVKSGLTF (323 aa)) the chain is on the cytoplasmic side. The Protein kinase domain maps to 519–776 (FKEFNELGRG…DLIVKSGLTF (258 aa)). ATP-binding positions include 525-533 (LGRGSFGFV) and K547. The Proton acceptor role is filled by D644.

The protein belongs to the protein kinase superfamily. Ser/Thr protein kinase family. In terms of assembly, homodimer. As to expression, expressed in roots, leaves, shoot apical meristems (SAM), and floral buds.

The protein localises to the membrane. The enzyme catalyses L-seryl-[protein] + ATP = O-phospho-L-seryl-[protein] + ADP + H(+). It catalyses the reaction L-threonyl-[protein] + ATP = O-phospho-L-threonyl-[protein] + ADP + H(+). In terms of biological role, serine/threonine-protein kinase with low activity. This Arabidopsis thaliana (Mouse-ear cress) protein is Serine/threonine-protein kinase-like protein CCR2 (CCR2).